Reading from the N-terminus, the 3623-residue chain is Cubilin (3623 aa).

Residues M1–G20 form the signal peptide. The propeptide at K21 to R32 is removed in mature form. The segment at P39 to G46 is interaction with AMN. An N-linked (GlcNAc...) asparagine glycan is attached at N95. The EGF-like 1 domain maps to E129–S165. 9 disulfides stabilise this stretch: C133–C144, C138–C153, C155–C164, C171–C187, C181–C196, C198–C207, C264–C277, C271–C286, and C289–C300. Residues D167–A208 form the EGF-like 2; calcium-binding domain. Residues D260–Q301 form the EGF-like 3; calcium-binding domain. Positions D302–T345 constitute an EGF-like 4; calcium-binding domain. EGF-like domains are found at residues P346–N385 and L395–T430. Cystine bridges form between C350-C363, C357-C376, C399-C409, C404-C418, C420-C429, C436-C447, C441-C456, C458-C467, C474-C500, C527-C549, C590-C616, C643-C665, and C708-C734. N428 carries an N-linked (GlcNAc...) asparagine glycan. The EGF-like 7; calcium-binding domain maps to N432–Q468. CUB domains follow at residues C474–K586, C590–T702, C708–A816, C817–D928, C932–I1042, C1048–S1161, C1165–R1277, C1278–H1389, C1391–V1506, C1510–E1619, C1620–S1734, C1738–I1850, G1852–V1963, C1978–S2091, C2092–K2213, C2217–A2334, C2336–S2448, C2452–T2565, C2570–T2687, C2689–N2801, C2805–R2919, C2920–I3035, C3037–T3150, C3157–V3274, C3278–A3393, C3395–S3507, and C3511–S3623. N491 carries an N-linked (GlcNAc...) asparagine glycan. 2 N-linked (GlcNAc...) asparagine glycosylation sites follow: N711 and N749. C761 and C779 are joined by a disulfide. A glycan (N-linked (GlcNAc...) asparagine) is linked at N781. The cysteines at positions 817 and 842 are disulfide-linked. N-linked (GlcNAc...) asparagine glycosylation is present at N857. 2 disulfides stabilise this stretch: C869–C891 and C932–C958. N957 is a glycosylation site (N-linked (GlcNAc...) asparagine). E980 is a binding site for Ca(2+). Residue N984 is glycosylated (N-linked (GlcNAc...) asparagine). A disulfide bridge connects residues C985 and C1005. The Ca(2+) site is built by D988, D1027, and L1030. C1048 and C1074 are joined by a disulfide. Ca(2+) contacts are provided by E1096, D1105, and D1146. The cysteines at positions 1165 and 1191 are disulfide-linked. N1168 is a glycosylation site (N-linked (GlcNAc...) asparagine). Positions 1213, 1221, 1262, 1264, and 1265 each coordinate Ca(2+). The cysteines at positions 1218 and 1240 are disulfide-linked. C1278 and C1306 are oxidised to a cystine. N1285, N1307, and N1319 each carry an N-linked (GlcNAc...) asparagine glycan. E1328 contacts Ca(2+). An N-linked (GlcNAc...) asparagine glycan is attached at N1332. A disulfide bridge links C1333 with C1351. The Ca(2+) site is built by D1336, D1373, and I1375. Cystine bridges form between C1391/C1417 and C1444/C1466. N1500 carries N-linked (GlcNAc...) asparagine glycosylation. C1510 and C1536 are joined by a disulfide. N-linked (GlcNAc...) asparagine glycans are attached at residues N1551, N1646, and N1671. C1620 and C1647 form a disulfide bridge. Cystine bridges form between C1675–C1697, C1738–C1764, and C1791–C1812. N-linked (GlcNAc...) asparagine glycans are attached at residues N1802 and N1819. 3 disulfides stabilise this stretch: C1905–C1927, C1978–C2006, and C2032–C2054. N-linked (GlcNAc...) asparagine glycosylation is found at N2085 and N2117. Cystine bridges form between C2092–C2118 and C2217–C2247. N2274 carries N-linked (GlcNAc...) asparagine glycosylation. 5 cysteine pairs are disulfide-bonded: C2275–C2297, C2336–C2363, C2390–C2411, C2452–C2478, and C2505–C2527. N2400 carries N-linked (GlcNAc...) asparagine glycosylation. N-linked (GlcNAc...) asparagine glycosylation is found at N2531, N2581, and N2610. A disulfide bridge links C2570 with C2599. Cystine bridges form between C2628/C2649, C2689/C2715, C2742/C2764, C2805/C2831, C2860/C2883, C2920/C2946, and C2977/C2999. Residues N2813, N2875, N2945, and N2989 are each glycosylated (N-linked (GlcNAc...) asparagine). Phosphothreonine is present on T3008. 2 disulfides stabilise this stretch: C3037–C3064 and C3091–C3113. N-linked (GlcNAc...) asparagine glycosylation is found at N3042, N3106, N3125, and N3165. 2 disulfide bridges follow: C3157/C3185 and C3215/C3237. Residues N3268, N3283, and N3290 are each glycosylated (N-linked (GlcNAc...) asparagine). Intrachain disulfides connect C3278/C3306 and C3332/C3354. N-linked (GlcNAc...) asparagine glycosylation is found at N3357, N3400, and N3430. A disulfide bond links C3395 and C3421. 3 disulfides stabilise this stretch: C3448–C3470, C3511–C3537, and C3564–C3586. An N-linked (GlcNAc...) asparagine glycan is attached at N3533.

In terms of assembly, interacts with AMN. Component of the cubam complex composed of one CUBN trimer and one AMN chain. The cubam complex can dimerize. Interacts with LRP2 in a dual-receptor complex in a calcium-dependent manner. Found in a complex with PID1/PCLI1, LRP1 and CUBNI. Interacts with LRP1 and PID1/PCLI1. The precursor is cleaved by a trans-Golgi proteinase furin, removing a propeptide. Post-translationally, N-glycosylated. In terms of tissue distribution, expressed to intestinal, renal and yalk sac apical membranes. In kidney, expressed in the proximal tubule.

It is found in the cell membrane. The protein resides in the endosome membrane. Its subcellular location is the lysosome membrane. Endocytic receptor which plays a role in lipoprotein, vitamin and iron metabolism by facilitating their uptake. Acts together with LRP2 to mediate endocytosis of high-density lipoproteins, GC, hemoglobin, ALB, TF and SCGB1A1. Acts together with AMN to mediate endocytosis of the CBLIF-cobalamin complex. Binds to ALB, MB, Kappa and lambda-light chains, TF, hemoglobin, GC, SCGB1A1, APOA1, high density lipoprotein, and the CBLIF-cobalamin complex. Ligand binding requires calcium. Serves as important transporter in several absorptive epithelia, including intestine, renal proximal tubules and embryonic yolk sac. May play an important role in the development of the peri-implantation embryo through internalization of APOA1 and cholesterol. Binds to LGALS3 at the maternal-fetal interface. The sequence is that of Cubilin (Cubn) from Rattus norvegicus (Rat).